Consider the following 105-residue polypeptide: Diuretic hormone class 2 (105 aa).

The first 23 residues, 1–23 (MTVLCTLMAFVMVVAISSLTVDA), serve as a signal peptide directing secretion. Positions 24-63 (IPHSHESYWDQQDDIDRDEFLELLSRLSRTVMNRPEMENS) are excised as a propeptide. At P96 the chain carries Proline amide. Residues 101-105 (RSEQA) constitute a propeptide that is removed on maturation.

As to expression, expressed in central brain, antennal lobes, retrocerebral complex and gnathal, thoracic and abdominal ganglia but not in optical lobes (at protein level).

The protein resides in the secreted. Its function is as follows. Regulation of fluid secretion. Stimulates Malpighian tubules fluid secretion. The chain is Diuretic hormone class 2 from Camponotus floridanus (Florida carpenter ant).